Reading from the N-terminus, the 103-residue chain is Small ribosomal subunit protein uS10 (103 aa).

The protein belongs to the universal ribosomal protein uS10 family. Part of the 30S ribosomal subunit.

In terms of biological role, involved in the binding of tRNA to the ribosomes. This chain is Small ribosomal subunit protein uS10, found in Burkholderia mallei (strain NCTC 10247).